Here is a 341-residue protein sequence, read N- to C-terminus: MESFASLAGGGSSSTTARLPELISPENPDHISPPPLLYQLLAGPESSARQHGHDGHHHGGGGGEAAAAAVQGQVSPAGAEAAVKAEIMSHPQYSALLAAYLGCKKVGAPPDVLTKLTAVPAAQQLDEADGHPRRRHEPQRDDDPDQLDQFMDAYCSMLTRYREELERPILEAAEFFSRVETQLDSLAESNCEGTGSSEEEQDPSDKQLKHQLLRKYGGSLGDLRQVFSKRTKKGKLPKEARQKLLHWWELHYKWPYPSEMEKMTLAQTTGLDQKQINNWFINQRKRHWKPTPVAGTAFPTMEAAGGGFRHSGHGGGLAAAAALPLYMGRPFVVDGMYRLGS.

Positions 1-17 are enriched in low complexity; sequence MESFASLAGGGSSSTTA. 3 disordered regions span residues 1–72, 121–148, and 187–207; these read MESF…AVQG, AAQQ…DQLD, and AESN…SDKQ. Over residues 187–196 the composition is skewed to polar residues; that stretch reads AESNCEGTGS. Positions 207–227 constitute an ELK domain; the sequence is QLKHQLLRKYGGSLGDLRQVF. The homeobox; TALE-type DNA-binding region spans 228-291; sequence SKRTKKGKLP…NQRKRHWKPT (64 aa).

It belongs to the TALE/KNOX homeobox family.

The protein localises to the nucleus. In terms of biological role, probable transcription factor that may be involved in shoot formation during embryogenesis. The protein is Homeobox protein knotted-1-like 8 (OSH43) of Oryza sativa subsp. japonica (Rice).